We begin with the raw amino-acid sequence, 144 residues long: MQLNNLKPAAGSKHAKRRVGRGIGSGLGKTAGRGHKGQKSRSGGFHKVGFEGGQMPLYRRLPKRGFTSLTKAFTAEVTLRDIERLEAAEVDLLVLKQAGLVGDLVKSAKVIKAGELTRKVTIKGLGATAGAKAAIEAAGGQIAA.

The interval 1–48 is disordered; it reads MQLNNLKPAAGSKHAKRRVGRGIGSGLGKTAGRGHKGQKSRSGGFHKV. Positions 21 to 31 are enriched in gly residues; it reads RGIGSGLGKTA.

Belongs to the universal ribosomal protein uL15 family. In terms of assembly, part of the 50S ribosomal subunit.

Functionally, binds to the 23S rRNA. In Cupriavidus taiwanensis (strain DSM 17343 / BCRC 17206 / CCUG 44338 / CIP 107171 / LMG 19424 / R1) (Ralstonia taiwanensis (strain LMG 19424)), this protein is Large ribosomal subunit protein uL15.